Reading from the N-terminus, the 653-residue chain is tRNA uridine 5-carboxymethylaminomethyl modification enzyme MnmG (653 aa).

Residues 18-23 (GAGHAG), Val130, and Thr195 contribute to the FAD site. 287–301 (GPRYCPSIEDKVVRF) serves as a coordination point for NAD(+). Gln384 is a binding site for FAD. Positions 624–653 (SQTKSSASVDKRASSDNESSRPTSSASDSL) are disordered. Basic and acidic residues predominate over residues 632–642 (VDKRASSDNES). Residues 643–653 (SRPTSSASDSL) show a composition bias toward polar residues.

The protein belongs to the MnmG family. In terms of assembly, homodimer. Heterotetramer of two MnmE and two MnmG subunits. Requires FAD as cofactor.

It localises to the cytoplasm. Its function is as follows. NAD-binding protein involved in the addition of a carboxymethylaminomethyl (cmnm) group at the wobble position (U34) of certain tRNAs, forming tRNA-cmnm(5)s(2)U34. The polypeptide is tRNA uridine 5-carboxymethylaminomethyl modification enzyme MnmG (Rhodopirellula baltica (strain DSM 10527 / NCIMB 13988 / SH1)).